The sequence spans 217 residues: Ribosomal RNA small subunit methyltransferase G (217 aa).

S-adenosyl-L-methionine is bound by residues G79, L84, 130-131 (IE), and R148.

Belongs to the methyltransferase superfamily. RNA methyltransferase RsmG family.

It is found in the cytoplasm. It catalyses the reaction guanosine(527) in 16S rRNA + S-adenosyl-L-methionine = N(7)-methylguanosine(527) in 16S rRNA + S-adenosyl-L-homocysteine. In terms of biological role, specifically methylates the N7 position of guanine in position 527 of 16S rRNA. The chain is Ribosomal RNA small subunit methyltransferase G from Desulfotalea psychrophila (strain LSv54 / DSM 12343).